Reading from the N-terminus, the 33-residue chain is Photosystem II reaction center protein Psb30 (33 aa).

Residues 5-25 (VIAQLTVLTLMVVSGPLVIVL) form a helical membrane-spanning segment.

The protein belongs to the Psb30/Ycf12 family. As to quaternary structure, PSII is composed of 1 copy each of membrane proteins PsbA, PsbB, PsbC, PsbD, PsbE, PsbF, PsbH, PsbI, PsbJ, PsbK, PsbL, PsbM, PsbT, PsbX, PsbY, PsbZ, Psb30/Ycf12, peripheral proteins of the oxygen-evolving complex and a large number of cofactors. It forms dimeric complexes.

The protein localises to the plastid. It localises to the chloroplast thylakoid membrane. In terms of biological role, a core subunit of photosystem II (PSII), probably helps stabilize the reaction center. The chain is Photosystem II reaction center protein Psb30 from Pinus koraiensis (Korean pine).